The chain runs to 447 residues: UPF0210 protein lp_2507 (447 aa).

This sequence belongs to the UPF0210 family. In terms of assembly, homodimer.

This Lactiplantibacillus plantarum (strain ATCC BAA-793 / NCIMB 8826 / WCFS1) (Lactobacillus plantarum) protein is UPF0210 protein lp_2507.